Here is a 562-residue protein sequence, read N- to C-terminus: MKDYLRTQIRRVLDALGDVPDDFEIELEAPDRPEHGDLATNTALRLASVLGDNPRSIAETLAERLRERVDPARIKSVEVAGPGFVNFRFAQDYLFDGLADLLAQGDTFGQTDAGAGERALVEYVSANPTGPLNVGHGRNAVLGDTIANLLAWTGYDVTREYYYNDAGRQMRVLAQSVRARYEALAGNVPTTTLTLDDDTTVEVPETFPEDGYLGQYIVEIAQALYDEHGDALCATDDLAPFRAAAETAIFGDIEATLRALNIDMDGYANEQALHDEGRVDAVLDGLADAGYTYEEDGALWFKTTEFGTEDDTVLVKQTGEPTYRTPDIAYHTAKFERGFDLMVDVFGADHHAAYPDVLSALDVLGYDTDRVDVILYQFVTLVRGDEPVKMSTRRANYVTLDDLIEQVGADVTRFFFLMRSPDTHLNFDLELAEEESEKNPVFYLQYAHARICSVLDKAEEVGFSHDEDADLALLTHEDEIALIKELLRFPRELQNAADARAPHFVPNYLRDVATAFSQFYDNCRIIGEEQELASARMRLALAAKTVLKNGLTVLGISAPRQM.

Residues 126–136 (ANPTGPLNVGH) carry the 'HIGH' region motif.

It belongs to the class-I aminoacyl-tRNA synthetase family. As to quaternary structure, monomer.

It localises to the cytoplasm. It carries out the reaction tRNA(Arg) + L-arginine + ATP = L-arginyl-tRNA(Arg) + AMP + diphosphate. The chain is Arginine--tRNA ligase from Salinibacter ruber (strain DSM 13855 / M31).